The following is a 119-amino-acid chain: Large ribosomal subunit protein bL20 (119 aa).

This sequence belongs to the bacterial ribosomal protein bL20 family.

Its function is as follows. Binds directly to 23S ribosomal RNA and is necessary for the in vitro assembly process of the 50S ribosomal subunit. It is not involved in the protein synthesizing functions of that subunit. The polypeptide is Large ribosomal subunit protein bL20 (Streptococcus pneumoniae serotype 2 (strain D39 / NCTC 7466)).